A 228-amino-acid chain; its full sequence is L-ribulose-5-phosphate 4-epimerase UlaF (228 aa).

Substrate is bound by residues 26-27, 43-44, and 72-73; these read GN, SG, and SS. Residues D74, H93, and H95 each contribute to the Zn(2+) site. The active-site Proton donor/acceptor is the D118. H167 contacts Zn(2+). Residue Y225 is the Proton donor/acceptor of the active site.

It belongs to the aldolase class II family. AraD/FucA subfamily. Zn(2+) is required as a cofactor.

The enzyme catalyses L-ribulose 5-phosphate = D-xylulose 5-phosphate. It participates in cofactor degradation; L-ascorbate degradation; D-xylulose 5-phosphate from L-ascorbate: step 4/4. In terms of biological role, catalyzes the isomerization of L-ribulose 5-phosphate to D-xylulose 5-phosphate. Is involved in the anaerobic L-ascorbate utilization. This Escherichia coli O139:H28 (strain E24377A / ETEC) protein is L-ribulose-5-phosphate 4-epimerase UlaF.